Here is a 344-residue protein sequence, read N- to C-terminus: MDSYSAPESTPSASSRPEDYFIGATPLQKRLESVRKQSSFILTPPRRKIPQCSQLQEDVDPQKVAFLLHKQWTLYSLTPLYKFSYSNLKEYSRLLNAFIVAEKQKGLAVEVGEDFNIKVIFSTLLGMKGTQRDPEAFLVQIVSKSQLPSENREGKVLWTGWFCCVFGDSLLETVSEDFTCLPLFLANGAESNTAIIGTWFQKTFDCYFSPLAINAFNLSWMAAMWTACKMDHYVATTEFLWSVPCSPQSLDISFAIHPEDAKALWDSVHKTPGEVTQEEVDLFMDCLYSHFHRHFKIHLSATRLVRVSTSVASAHTDGKIKILCHKYLIGVLAYLTELAIFQIE.

Ser39 is modified (phosphoserine). Thr43 carries the phosphothreonine modification. Ser53 bears the Phosphoserine mark.

The protein belongs to the CENP-L/IML3 family. As to quaternary structure, component of the CENPA-CAD complex, composed of CENPI, CENPK, CENPL, CENPO, CENPP, CENPQ, CENPR and CENPS. The CENPA-CAD complex interacts with the CENPA-NAC complex, at least composed of CENPA, CENPC, CENPH, CENPM, CENPN, CENPT and CENPU.

It localises to the nucleus. It is found in the chromosome. The protein resides in the centromere. Component of the CENPA-CAD (nucleosome distal) complex, a complex recruited to centromeres which is involved in assembly of kinetochore proteins, mitotic progression and chromosome segregation. May be involved in incorporation of newly synthesized CENPA into centromeres via its interaction with the CENPA-NAC complex. In Homo sapiens (Human), this protein is Centromere protein L (CENPL).